The chain runs to 309 residues: Ribonuclease Z (309 aa).

Residues His-63, His-65, Asp-67, His-68, His-145, Asp-216, and His-274 each coordinate Zn(2+). The active-site Proton acceptor is Asp-67.

The protein belongs to the RNase Z family. Homodimer. Zn(2+) is required as a cofactor.

The catalysed reaction is Endonucleolytic cleavage of RNA, removing extra 3' nucleotides from tRNA precursor, generating 3' termini of tRNAs. A 3'-hydroxy group is left at the tRNA terminus and a 5'-phosphoryl group is left at the trailer molecule.. Functionally, zinc phosphodiesterase, which displays some tRNA 3'-processing endonuclease activity. Probably involved in tRNA maturation, by removing a 3'-trailer from precursor tRNA. This Streptococcus pneumoniae serotype 19F (strain G54) protein is Ribonuclease Z.